Reading from the N-terminus, the 355-residue chain is Histidinol-phosphate aminotransferase (355 aa).

Position 211 is an N6-(pyridoxal phosphate)lysine (Lys211).

It belongs to the class-II pyridoxal-phosphate-dependent aminotransferase family. Histidinol-phosphate aminotransferase subfamily. In terms of assembly, homodimer. The cofactor is pyridoxal 5'-phosphate.

The enzyme catalyses L-histidinol phosphate + 2-oxoglutarate = 3-(imidazol-4-yl)-2-oxopropyl phosphate + L-glutamate. Its pathway is amino-acid biosynthesis; L-histidine biosynthesis; L-histidine from 5-phospho-alpha-D-ribose 1-diphosphate: step 7/9. The protein is Histidinol-phosphate aminotransferase of Aeromonas salmonicida (strain A449).